A 256-amino-acid chain; its full sequence is Fumarate reductase iron-sulfur subunit (256 aa).

The 2Fe-2S ferredoxin-type domain occupies methionine 7–phenylalanine 97. Tyrosine 14 serves as a coordination point for a menaquinone. The [2Fe-2S] cluster site is built by cysteine 58, cysteine 63, cysteine 66, and cysteine 78. A 4Fe-4S ferredoxin-type domain is found at leucine 151–leucine 180. The [4Fe-4S] cluster site is built by cysteine 160, cysteine 163, and cysteine 166. Positions 170, 216, and 222 each coordinate [3Fe-4S] cluster. A [4Fe-4S] cluster-binding site is contributed by cysteine 226. An a menaquinone-binding site is contributed by asparagine 237 to lysine 240.

Belongs to the succinate dehydrogenase/fumarate reductase iron-sulfur protein family. As to quaternary structure, fumarate dehydrogenase forms part of an enzyme complex containing four subunits: a flavoprotein, an iron-sulfur, and two hydrophobic anchor proteins. The cofactor is [2Fe-2S] cluster. Requires [3Fe-4S] cluster as cofactor. [4Fe-4S] cluster serves as cofactor.

The protein resides in the cell inner membrane. The enzyme catalyses a quinone + succinate = fumarate + a quinol. It carries out the reaction a menaquinone + succinate = a menaquinol + fumarate. This chain is Fumarate reductase iron-sulfur subunit (frdB), found in Haemophilus influenzae (strain ATCC 51907 / DSM 11121 / KW20 / Rd).